The following is a 948-amino-acid chain: Valine--tRNA ligase (948 aa).

Positions proline 40–histidine 50 match the 'HIGH' region motif. Positions lysine 551 to serine 555 match the 'KMSKS' region motif. Lysine 554 contacts ATP. Residues leucine 879–isoleucine 945 are a coiled coil.

This sequence belongs to the class-I aminoacyl-tRNA synthetase family. ValS type 1 subfamily. In terms of assembly, monomer.

It is found in the cytoplasm. It carries out the reaction tRNA(Val) + L-valine + ATP = L-valyl-tRNA(Val) + AMP + diphosphate. In terms of biological role, catalyzes the attachment of valine to tRNA(Val). As ValRS can inadvertently accommodate and process structurally similar amino acids such as threonine, to avoid such errors, it has a 'posttransfer' editing activity that hydrolyzes mischarged Thr-tRNA(Val) in a tRNA-dependent manner. This Pseudomonas syringae pv. syringae (strain B728a) protein is Valine--tRNA ligase.